A 241-amino-acid polypeptide reads, in one-letter code: Phosphoribosylaminoimidazole-succinocarboxamide synthase (241 aa).

Belongs to the SAICAR synthetase family.

The catalysed reaction is 5-amino-1-(5-phospho-D-ribosyl)imidazole-4-carboxylate + L-aspartate + ATP = (2S)-2-[5-amino-1-(5-phospho-beta-D-ribosyl)imidazole-4-carboxamido]succinate + ADP + phosphate + 2 H(+). It functions in the pathway purine metabolism; IMP biosynthesis via de novo pathway; 5-amino-1-(5-phospho-D-ribosyl)imidazole-4-carboxamide from 5-amino-1-(5-phospho-D-ribosyl)imidazole-4-carboxylate: step 1/2. The chain is Phosphoribosylaminoimidazole-succinocarboxamide synthase (purC) from Bacillus subtilis (strain 168).